The chain runs to 243 residues: 4-phosphopantoate--beta-alanine ligase (243 aa).

ATP contacts are provided by residues arginine 15, arginine 37, 176–178 (DLN), and 182–183 (RT).

It belongs to the archaeal phosphopantothenate synthetase family. As to quaternary structure, homodimer.

It catalyses the reaction (R)-4-phosphopantoate + beta-alanine + ATP = (R)-4'-phosphopantothenate + AMP + diphosphate + H(+). It functions in the pathway cofactor biosynthesis; coenzyme A biosynthesis. Its function is as follows. Catalyzes the condensation of (R)-4-phosphopantoate and beta-alanine to 4'-phosphopantothenate in the CoA biosynthesis pathway. The protein is 4-phosphopantoate--beta-alanine ligase of Methanospirillum hungatei JF-1 (strain ATCC 27890 / DSM 864 / NBRC 100397 / JF-1).